The sequence spans 393 residues: Thyrotropin-releasing hormone receptor (393 aa).

Residues 1 to 28 (MENDTVSEMNQTELQPQAAVALEYQVVT) lie on the Extracellular side of the membrane. Asparagine 3 and asparagine 10 each carry an N-linked (GlcNAc...) asparagine glycan. The helical transmembrane segment at 29 to 51 (ILLVVIICGLGIVGNIMVVLVVM) threads the bilayer. The Cytoplasmic segment spans residues 52-61 (RTKHMRTPTN). Residues 62 to 83 (CYLVSLAVADLMVLVAAGLPNI) form a helical membrane-spanning segment. Topologically, residues 84-99 (TDSIYGSWVYGYVGCL) are extracellular. An intrachain disulfide couples cysteine 98 to cysteine 179. The chain crosses the membrane as a helical span at residues 100-121 (CITYLQYLGINASSCSITAFTI). Residues 122 to 144 (ERYIAICHPIKAQFLCTFSRAKK) are Cytoplasmic-facing. A helical membrane pass occupies residues 145-168 (IIIFVWAFTSIYCMLWFFLLDLNI). Residues 169-193 (STYKNAVVVSCGYKISRNYYSPIYL) lie on the Extracellular side of the membrane. The helical transmembrane segment at 194–215 (MDFGVFYVVPMILATVLYGFIA) threads the bilayer. The Cytoplasmic segment spans residues 216–266 (RILFLNPIPSDPKENSKMWKNDSIHQNKNLNLNATNRCFNSTVSSRKQVTK). Residues 267-288 (MLAVVVILFALLWMPYRTLVVV) form a helical membrane-spanning segment. The Extracellular segment spans residues 289-296 (NSFLSSPF). Residues 297 to 319 (QENWFLLFCRICIYLNSAINPVI) traverse the membrane as a helical segment. The Cytoplasmic segment spans residues 320-393 (YNLMSQKFRA…FDDTCLASEN (74 aa)).

The protein belongs to the G-protein coupled receptor 1 family.

It localises to the cell membrane. Functionally, receptor for thyrotropin-releasing hormone (TRH). Upon ligand binding, this G-protein-coupled receptor triggers activation of the phosphatidylinositol (IP3)-calcium-protein kinase C (PKC) pathway. The chain is Thyrotropin-releasing hormone receptor (Trhr) from Mus musculus (Mouse).